The sequence spans 118 residues: Acidic phospholipase A2 CM-I (118 aa).

Cystine bridges form between Cys-11–Cys-70, Cys-26–Cys-117, Cys-28–Cys-44, Cys-43–Cys-98, Cys-50–Cys-91, Cys-59–Cys-84, and Cys-77–Cys-89. Tyr-27, Gly-29, and Gly-31 together coordinate Ca(2+). Residue His-47 is part of the active site. Position 48 (Asp-48) interacts with Ca(2+). Residue Asp-92 is part of the active site.

The protein belongs to the phospholipase A2 family. Group I subfamily. D49 sub-subfamily. Ca(2+) is required as a cofactor. As to expression, expressed by the venom gland.

The protein localises to the secreted. The enzyme catalyses a 1,2-diacyl-sn-glycero-3-phosphocholine + H2O = a 1-acyl-sn-glycero-3-phosphocholine + a fatty acid + H(+). Functionally, snake venom phospholipase A2 (PLA2) that causes myonecrosis when injected intramuscularly, shows indirect hemolytic activity, abolishes twitches evoked by indirect stimulation earlier than those by direct stimulation (in the mouse phrenic nerve-diaphragm preparation) but does not produce complete neuromuscular block (up to 30 ug/ml) (in the chick biventer cervicis nerve-muscle preparation). PLA2 catalyzes the calcium-dependent hydrolysis of the 2-acyl groups in 3-sn-phosphoglycerides. The polypeptide is Acidic phospholipase A2 CM-I (Naja mossambica (Mozambique spitting cobra)).